A 1257-amino-acid polypeptide reads, in one-letter code: Elongation factor 2 (1257 aa).

The 130-residue stretch at 273–402 folds into the DOD-type homing endonuclease domain; the sequence is LAGLMFGDGC…LQLLLQKFDV (130 aa). Residues 541–782 enclose the tr-type G domain; it reads VEEHHNFAAE…MVVKHLPDPV (242 aa). GTP-binding positions include 616–620 and 670–673; these read DTPGH and NKVD. His-1120 carries the diphthamide modification. A compositionally biased stretch (basic and acidic residues) spans 1237-1250; sequence ERKGLKPEPPKPED. Residues 1237–1257 are disordered; the sequence is ERKGLKPEPPKPEDYIEDYGG.

Belongs to the TRAFAC class translation factor GTPase superfamily. Classic translation factor GTPase family. EF-G/EF-2 subfamily. This protein undergoes a protein self splicing that involves a post-translational excision of the intervening region (intein) followed by peptide ligation.

Its subcellular location is the cytoplasm. Its function is as follows. Catalyzes the GTP-dependent ribosomal translocation step during translation elongation. During this step, the ribosome changes from the pre-translocational (PRE) to the post-translocational (POST) state as the newly formed A-site-bound peptidyl-tRNA and P-site-bound deacylated tRNA move to the P and E sites, respectively. Catalyzes the coordinated movement of the two tRNA molecules, the mRNA and conformational changes in the ribosome. The chain is Elongation factor 2 from Methanopyrus kandleri (strain AV19 / DSM 6324 / JCM 9639 / NBRC 100938).